The chain runs to 291 residues: ATP synthase gamma chain (291 aa).

The protein belongs to the ATPase gamma chain family. F-type ATPases have 2 components, CF(1) - the catalytic core - and CF(0) - the membrane proton channel. CF(1) has five subunits: alpha(3), beta(3), gamma(1), delta(1), epsilon(1). CF(0) has three main subunits: a, b and c.

The protein resides in the cell inner membrane. Produces ATP from ADP in the presence of a proton gradient across the membrane. The gamma chain is believed to be important in regulating ATPase activity and the flow of protons through the CF(0) complex. The chain is ATP synthase gamma chain from Pelodictyon phaeoclathratiforme (strain DSM 5477 / BU-1).